Here is a 104-residue protein sequence, read N- to C-terminus: Nucleoid-associated protein LSL_1227 (104 aa).

The segment covering 1–19 (MMMRGMNMQSMMKQMQKLQ) has biased composition (low complexity). Positions 1-24 (MMMRGMNMQSMMKQMQKLQKNMKK) are disordered.

Belongs to the YbaB/EbfC family. Homodimer.

It is found in the cytoplasm. The protein localises to the nucleoid. Binds to DNA and alters its conformation. May be involved in regulation of gene expression, nucleoid organization and DNA protection. In Ligilactobacillus salivarius (strain UCC118) (Lactobacillus salivarius), this protein is Nucleoid-associated protein LSL_1227.